The primary structure comprises 236 residues: 1-(5-phosphoribosyl)-5-[(5-phosphoribosylamino)methylideneamino] imidazole-4-carboxamide isomerase (236 aa).

The active-site Proton acceptor is the Asp8. The active-site Proton donor is the Asp129.

The protein belongs to the HisA/HisF family.

It localises to the cytoplasm. The catalysed reaction is 1-(5-phospho-beta-D-ribosyl)-5-[(5-phospho-beta-D-ribosylamino)methylideneamino]imidazole-4-carboxamide = 5-[(5-phospho-1-deoxy-D-ribulos-1-ylimino)methylamino]-1-(5-phospho-beta-D-ribosyl)imidazole-4-carboxamide. Its pathway is amino-acid biosynthesis; L-histidine biosynthesis; L-histidine from 5-phospho-alpha-D-ribose 1-diphosphate: step 4/9. This is 1-(5-phosphoribosyl)-5-[(5-phosphoribosylamino)methylideneamino] imidazole-4-carboxamide isomerase from Methanospirillum hungatei JF-1 (strain ATCC 27890 / DSM 864 / NBRC 100397 / JF-1).